Here is a 435-residue protein sequence, read N- to C-terminus: tRNA(Ile)-lysidine synthase (435 aa).

Position 24–29 (24–29) interacts with ATP; it reads SGGLDS.

The protein belongs to the tRNA(Ile)-lysidine synthase family.

It localises to the cytoplasm. It carries out the reaction cytidine(34) in tRNA(Ile2) + L-lysine + ATP = lysidine(34) in tRNA(Ile2) + AMP + diphosphate + H(+). Ligates lysine onto the cytidine present at position 34 of the AUA codon-specific tRNA(Ile) that contains the anticodon CAU, in an ATP-dependent manner. Cytidine is converted to lysidine, thus changing the amino acid specificity of the tRNA from methionine to isoleucine. This Chromobacterium violaceum (strain ATCC 12472 / DSM 30191 / JCM 1249 / CCUG 213 / NBRC 12614 / NCIMB 9131 / NCTC 9757 / MK) protein is tRNA(Ile)-lysidine synthase.